A 273-amino-acid chain; its full sequence is Patr class II histocompatibility antigen, DO beta chain (273 aa).

The first 26 residues, 1 to 26 (MGSGWVPWVVALLVNLTRLDSSMTQG), serve as a signal peptide directing secretion. A beta-1 region spans residues 27–120 (TDSPEDFVIQ…LGAPFTVGRK (94 aa)). Topologically, residues 27-224 (TDSPEDFVIQ…RAQSEYSWKK (198 aa)) are extracellular. Disulfide bonds link Cys41–Cys105 and Cys143–Cys199. Asn45 carries N-linked (GlcNAc...) asparagine glycosylation. Residues 121 to 214 (VQPEVTVYPE…SLLSPVSVEW (94 aa)) form a beta-2 region. Residues 123-213 (PEVTVYPERT…SSLLSPVSVE (91 aa)) form the Ig-like C1-type domain. Residues 215-224 (RAQSEYSWKK) form a connecting peptide region. Residues 225–245 (MLSGIAAFLLGLIFLLVGIVI) traverse the membrane as a helical segment. Over 246 to 273 (QLRAQKGYVRTQMSGNEVSRAVLLPQSC) the chain is Cytoplasmic.

Belongs to the MHC class II family. In terms of assembly, heterodimer of an alpha chain (DOA) and a beta chain (DOB). Forms a heterotetrameric complex with an HLA-DM molecule during intracellular transport in endosomal/lysosomal compartments in B-cells.

It localises to the endosome membrane. The protein localises to the lysosome membrane. Its function is as follows. Important modulator in the HLA class II restricted antigen presentation pathway by interaction with the HLA-DM molecule in B-cells. Modifies peptide exchange activity of HLA-DM. The sequence is that of Patr class II histocompatibility antigen, DO beta chain (Patr-DOB) from Pan troglodytes (Chimpanzee).